Reading from the N-terminus, the 308-residue chain is Carbamate kinase (308 aa).

The protein belongs to the carbamate kinase family.

Its subcellular location is the cytoplasm. It catalyses the reaction hydrogencarbonate + NH4(+) + ATP = carbamoyl phosphate + ADP + H2O + H(+). The chain is Carbamate kinase from Synechocystis sp. (strain ATCC 27184 / PCC 6803 / Kazusa).